The following is a 386-amino-acid chain: Synaptotagmin-5 (386 aa).

A compositionally biased stretch (pro residues) spans 1–16; that stretch reads MFPEPPTPGSPAPETP. The tract at residues 1 to 21 is disordered; sequence MFPEPPTPGSPAPETPPDSSR. At 1-24 the chain is on the vesicular side; it reads MFPEPPTPGSPAPETPPDSSRIRQ. Residues 25-45 traverse the membrane as a helical segment; it reads GAVPAWVLATILLGSGLLVFS. The Cytoplasmic segment spans residues 46-386; that stretch reads SCFCLYRKRC…PDRARPIPAP (341 aa). C2 domains lie at 108–227 and 239–372; these read QLGR…QAWR and KLGD…AQWH. 12 residues coordinate Ca(2+): leucine 138, aspartate 139, aspartate 145, aspartate 197, phenylalanine 198, aspartate 199, serine 202, aspartate 205, aspartate 270, aspartate 276, aspartate 330, and aspartate 332.

This sequence belongs to the synaptotagmin family. Homodimer. Interacts with both alpha- and beta-tubulin. Requires Ca(2+) as cofactor. As to expression, expressed in kidney, adipose tissue, lung and heart, as well as at higher levels in brain.

It localises to the cytoplasmic vesicle. The protein resides in the secretory vesicle. Its subcellular location is the synaptic vesicle membrane. It is found in the recycling endosome membrane. In terms of biological role, may be involved in Ca(2+)-dependent exocytosis of secretory vesicles through Ca(2+) and phospholipid binding to the C2 domain or may serve as Ca(2+) sensors in the process of vesicular trafficking and exocytosis. Regulates the Ca(2+)-dependent secretion of norepinephrine in PC12 cells. Required for export from the endocytic recycling compartment to the cell surface. The sequence is that of Synaptotagmin-5 (Syt5) from Rattus norvegicus (Rat).